A 324-amino-acid chain; its full sequence is Uroporphyrinogen decarboxylase (324 aa).

Substrate-binding positions include 14–18, Phe32, Asp63, Tyr136, Ser191, and His302; that span reads RQAGR.

This sequence belongs to the uroporphyrinogen decarboxylase family. As to quaternary structure, homodimer.

The protein localises to the cytoplasm. It carries out the reaction uroporphyrinogen III + 4 H(+) = coproporphyrinogen III + 4 CO2. Its pathway is porphyrin-containing compound metabolism; protoporphyrin-IX biosynthesis; coproporphyrinogen-III from 5-aminolevulinate: step 4/4. Its function is as follows. Catalyzes the decarboxylation of four acetate groups of uroporphyrinogen-III to yield coproporphyrinogen-III. The protein is Uroporphyrinogen decarboxylase of Neorickettsia sennetsu (strain ATCC VR-367 / Miyayama) (Ehrlichia sennetsu).